Consider the following 395-residue polypeptide: Sulfate adenylyltransferase (395 aa).

The protein belongs to the sulfate adenylyltransferase family.

The catalysed reaction is sulfate + ATP + H(+) = adenosine 5'-phosphosulfate + diphosphate. The protein operates within sulfur metabolism; hydrogen sulfide biosynthesis; sulfite from sulfate: step 1/3. This is Sulfate adenylyltransferase from Synechococcus elongatus (strain ATCC 33912 / PCC 7942 / FACHB-805) (Anacystis nidulans R2).